Reading from the N-terminus, the 147-residue chain is Sec-independent protein translocase protein TatB (147 aa).

A helical membrane pass occupies residues 2–22 (FDGIGFMELLLIGVLGLVVLG). A compositionally biased stretch (polar residues) spans 85–97 (QLKQAAQSVNRPY). The tract at residues 85 to 147 (QLKQAAQSVN…DTRSNPKANG (63 aa)) is disordered. The span at 113–133 (ASQSVSTEASPSASSAPTSES) shows a compositional bias: low complexity.

This sequence belongs to the TatB family. As to quaternary structure, the Tat system comprises two distinct complexes: a TatABC complex, containing multiple copies of TatA, TatB and TatC subunits, and a separate TatA complex, containing only TatA subunits. Substrates initially bind to the TatABC complex, which probably triggers association of the separate TatA complex to form the active translocon.

It localises to the cell inner membrane. In terms of biological role, part of the twin-arginine translocation (Tat) system that transports large folded proteins containing a characteristic twin-arginine motif in their signal peptide across membranes. Together with TatC, TatB is part of a receptor directly interacting with Tat signal peptides. TatB may form an oligomeric binding site that transiently accommodates folded Tat precursor proteins before their translocation. The protein is Sec-independent protein translocase protein TatB of Shewanella sp. (strain ANA-3).